The primary structure comprises 299 residues: Acetaldehyde dehydrogenase (299 aa).

11–14 (SGNI) contacts NAD(+). The active-site Acyl-thioester intermediate is cysteine 126. Residues 157 to 165 (SAGPGTRAN) and asparagine 267 each bind NAD(+).

Belongs to the acetaldehyde dehydrogenase family.

It carries out the reaction acetaldehyde + NAD(+) + CoA = acetyl-CoA + NADH + H(+). The sequence is that of Acetaldehyde dehydrogenase from Bacillus thuringiensis (strain Al Hakam).